Reading from the N-terminus, the 179-residue chain is Large ribosomal subunit protein uL5 (179 aa).

Belongs to the universal ribosomal protein uL5 family. In terms of assembly, part of the 50S ribosomal subunit; part of the 5S rRNA/L5/L18/L25 subcomplex. Contacts the 5S rRNA and the P site tRNA. Forms a bridge to the 30S subunit in the 70S ribosome.

Its function is as follows. This is one of the proteins that bind and probably mediate the attachment of the 5S RNA into the large ribosomal subunit, where it forms part of the central protuberance. In the 70S ribosome it contacts protein S13 of the 30S subunit (bridge B1b), connecting the 2 subunits; this bridge is implicated in subunit movement. Contacts the P site tRNA; the 5S rRNA and some of its associated proteins might help stabilize positioning of ribosome-bound tRNAs. The sequence is that of Large ribosomal subunit protein uL5 from Dichelobacter nodosus (strain VCS1703A).